A 295-amino-acid chain; its full sequence is Aquaporin-9 (295 aa).

Over 1-24 (MPSEKDGAKKSLMQRLALKSRIAK) the chain is Cytoplasmic. A helical membrane pass occupies residues 25-43 (ETLSEFLGTFIMIVLGCSS). At 44-57 (IAQAVLSRERFGGI) the chain is on the extracellular side. A helical membrane pass occupies residues 58 to 77 (ITINIGFASAVVMALYVTFG). The Cytoplasmic portion of the chain corresponds to 78–79 (IS). The discontinuously helical intramembrane region spans 80–92 (GGHINPAVSFAMC). Positions 84-86 (NPA) match the NPA 1 motif. At 93-98 (AFGRME) the chain is on the cytoplasmic side. Residues 99-123 (WFKFPFYVGAQFLGAFVGAATVFGI) traverse the membrane as a helical segment. The Extracellular portion of the chain corresponds to 124–160 (YYDGLMAFAGGKLLVVGENATAFIFATYPAPFISTPG). Residues 161–178 (AFVDQVVSTMFLLLIVFA) form a helical membrane-spanning segment. The Cytoplasmic portion of the chain corresponds to 179-190 (MFDSRNLGVPRG). The helical transmembrane segment at 191–207 (LEPVVIGLLIIVLSCSL) threads the bilayer. The Extracellular segment spans residues 208–210 (GLN). Positions 211–225 (SGCAMNPARDLSPRL) form an intramembrane region, discontinuously helical. Positions 216–218 (NPA) match the NPA 2 motif. Topologically, residues 226-243 (FTALAGWGFEVFTVGNNF) are extracellular. A helical membrane pass occupies residues 244 to 264 (WWIPVVGPMIGAFLGGLIYIL). Over 265–295 (FIQMHHSKLDPDMKAEPSENNLEKHELSVIM) the chain is Cytoplasmic.

Belongs to the MIP/aquaporin (TC 1.A.8) family. Homotetramer; each monomer provides an independent glycerol/water pore. As to expression, detected in testis and liver. Detected in immature spermatocytes and in interstitial Leydig cells.

Its subcellular location is the cell membrane. It localises to the basolateral cell membrane. The catalysed reaction is H2O(in) = H2O(out). The enzyme catalyses glycerol(in) = glycerol(out). It catalyses the reaction urea(in) = urea(out). It carries out the reaction (S)-lactate(in) = (S)-lactate(out). The catalysed reaction is NH4(+)(in) = NH4(+)(out). The enzyme catalyses uracil(in) = uracil(out). It catalyses the reaction adenine(out) = adenine(in). It carries out the reaction 3-hydroxybutanoate(in) = 3-hydroxybutanoate(out). The catalysed reaction is D-sorbitol(in) = D-sorbitol(out). The enzyme catalyses D-mannitol(in) = D-mannitol(out). It catalyses the reaction H2O2(out) = H2O2(in). It carries out the reaction arsenite(in) = arsenite(out). The catalysed reaction is selenite(in) = selenite(out). Its activity is regulated as follows. Channel activity is inhibited by mercury ions and phloretin. Functionally, aquaglyceroporins form homotetrameric transmembrane channels, with each monomer independently mediating glycerol and water transport across the plasma membrane along their osmotic gradient. AQP9 is the primary route for glycerol uptake in hepatocytes, supporting hepatic gluconeogenesis. It exhibits broad specificity and may transport various small, non-charged solutes, including carbamides, polyols, purines, and pyrimidines. AQP9 may also facilitate hepatic urea extrusion. Due to its permeability to lactate, AQP9 might participate in the astrocyte-to-neuron lactate shuttle, supplying neurons with energy. Additionally, AQP9 is permeable to arsenite, contributing to arsenic excretion by the liver and providing partial protection against arsenic toxicity. It is also permeable to H2O2 in vivo. Could also be permeable to ammonium. This is Aquaporin-9 from Rattus norvegicus (Rat).